A 104-amino-acid chain; its full sequence is 2,4-dinitrotoluene dioxygenase system, ferredoxin component (104 aa).

Positions 1 to 21 (MSENWIDAAARDEVPRGRRDR) are disordered. Residues 5-101 (WIDAAARDEV…VKIENMRVML (97 aa)) form the Rieske domain. 4 residues coordinate [2Fe-2S] cluster: cysteine 45, histidine 47, cysteine 64, and histidine 67.

Belongs to the bacterial ring-hydroxylating dioxygenase ferredoxin component family. As to quaternary structure, the 2,4-dinitrotoluene dioxygenase (DNTDO) multicomponent enzyme system is composed of an electron transfer component and a dioxygenase component (iron sulfur protein (ISP)). The electron transfer component is composed of a ferredoxin reductase (DntAa) and a ferredoxin (DntAb), and the dioxygenase component is formed of a large alpha subunit (DntAc) and a small beta subunit (DntAd). [2Fe-2S] cluster serves as cofactor.

In terms of biological role, component of the 2,4-dinitrotoluene dioxygenase (DNTDO) multicomponent enzyme system which catalyzes the incorporation of both atoms of molecular oxygen into 2,4-dinitrotoluene (DNT) to form 4-methyl-5-nitrocatechol (MNC) and nitrite. Functions as an intermediate electron transfer protein via a specific interaction with iron sulfur protein components (ISP)(DntAc and DntAd). Also able to convert naphthalene to cis-(1R,2S)-dihydroxy-1,2-dihydronaphthalene. The chain is 2,4-dinitrotoluene dioxygenase system, ferredoxin component from Burkholderia sp. (strain RASC).